A 64-amino-acid chain; its full sequence is Neuropeptide-like 4 (64 aa).

A signal peptide spans 1 to 18 (MFKLLVVVFAALFAAALA). Propeptides lie at residues 19–40 (VPAP…EPAP) and 63–64 (YG).

Its subcellular location is the secreted. This is Neuropeptide-like 4 (Nplp4) from Drosophila melanogaster (Fruit fly).